The sequence spans 531 residues: Probable mitochondrial-processing peptidase subunit beta, mitochondrial (531 aa).

The transit peptide at 1–78 (MAMKNLLSLA…ENPDKRFLKY (78 aa)) directs the protein to the mitochondrion. The disordered stretch occupies residues 30-50 (SAIDSVPASASPTALSPPPPH). His-141 lines the Zn(2+) pocket. Catalysis depends on Glu-144, which acts as the Proton acceptor. His-145 lines the Zn(2+) pocket. Glu-214 is a catalytic residue. Glu-221 serves as a coordination point for Zn(2+).

This sequence belongs to the peptidase M16 family. Heterodimer of an alpha subunit and a beta subunit subunits, forming the mitochondrial processing protease (MPP) in which the alpha subunit is involved in substrate recognition and binding and the beta subunit is the catalytic subunit. Component of the ubiquinol-cytochrome c oxidoreductase (cytochrome b-c1 complex, complex III, CIII), a multisubunit enzyme composed of 10 subunits. The complex is composed of 3 respiratory subunits cytochrome b (MT-CYB), cytochrome c1 (CYC1-1 or CYC1-2) and Rieske protein (UCR1-1 or UCR1-2), 2 core protein subunits MPPalpha1 (or MPPalpha2) and MPPB, and 5 low-molecular weight protein subunits QCR7-1 (or QCR7-2), UCRQ-1 (or UCRQ-2), QCR9, UCRY and probably QCR6-1 (or QCR6-2). The complex exists as an obligatory dimer and forms supercomplexes (SCs) in the inner mitochondrial membrane with NADH-ubiquinone oxidoreductase (complex I, CI), resulting in different assemblies (supercomplexes SCI(1)III(2) and SCI(2)III(4)). Zn(2+) serves as cofactor.

The protein resides in the mitochondrion. The protein localises to the mitochondrion inner membrane. It carries out the reaction Release of N-terminal transit peptides from precursor proteins imported into the mitochondrion, typically with Arg in position P2.. Its activity is regulated as follows. Binding to the alpha subunit is required for catalytic activity. Functionally, catalytic subunit of the essential mitochondrial processing protease (MPP), which cleaves the mitochondrial sequence off newly imported precursors proteins. Preferentially, cleaves after an arginine at position P2. Component of the ubiquinol-cytochrome c oxidoreductase, a multisubunit transmembrane complex that is part of the mitochondrial electron transport chain which drives oxidative phosphorylation. The respiratory chain contains 3 multisubunit complexes succinate dehydrogenase (complex II, CII), ubiquinol-cytochrome c oxidoreductase (cytochrome b-c1 complex, complex III, CIII) and cytochrome c oxidase (complex IV, CIV), that cooperate to transfer electrons derived from NADH and succinate to molecular oxygen, creating an electrochemical gradient over the inner membrane that drives transmembrane transport and the ATP synthase. The cytochrome b-c1 complex catalyzes electron transfer from ubiquinol to cytochrome c, linking this redox reaction to translocation of protons across the mitochondrial inner membrane, with protons being carried across the membrane as hydrogens on the quinol. In the process called Q cycle, 2 protons are consumed from the matrix, 4 protons are released into the intermembrane space and 2 electrons are passed to cytochrome c. This Arabidopsis thaliana (Mouse-ear cress) protein is Probable mitochondrial-processing peptidase subunit beta, mitochondrial (MPPbeta).